The sequence spans 311 residues: E3 ubiquitin-protein ligase RNF126 (311 aa).

The residue at position 2 (alanine 2) is an N-acetylalanine. Serine 5 is modified (phosphoserine). Residues 5-100 (SPHPGRYFCH…FEIPTFPPGA (96 aa)) are required for interaction with BAG6. 4 residues coordinate Zn(2+): cysteine 13, cysteine 16, cysteine 29, and cysteine 32. The C4-type zinc finger occupies 13 to 32 (CHCCSVEIVPRLPDYICPRC). 2 disordered regions span residues 42–64 (EETR…SRPP) and 94–132 (PTFP…ARLT). A compositionally biased stretch (polar residues) spans 47 to 61 (TENGSAPSTAPTDQS). The segment covering 103–116 (DDGRDPESRRERDH) has biased composition (basic and acidic residues). Residues 117-132 (PSRHRYGARQPRARLT) are compositionally biased toward basic residues. A sufficient for interaction with AICDA region spans residues 200–304 (TGPPPADKEK…SSSSSSSPSN (105 aa)). Residues 229 to 270 (CPVCKDDYALGERVRQLPCNHLFHDGCIVPWLEQHDSCPVCR) form an RING-type zinc finger. Residues 277-311 (NTATNPPGLTGVSFSSSSSSSSSSSPSNENATSNS) are disordered. Over residues 289-311 (SFSSSSSSSSSSSPSNENATSNS) the composition is skewed to low complexity.

Interacts with CCDC50, EGFR, FLT3 and SCAMP3. Interacts with BAG6 (via ubiquitin-like domain); required for BAG6-dependent ubiquitination of proteins mislocalized to the cytosol. Interacts with CDKN1A. Interacts with AICDA. Post-translationally, ubiquitinated. May undergo autoubiquitination. Highly expressed in liver and testis.

Its subcellular location is the cytoplasm. The protein localises to the nucleus. It carries out the reaction S-ubiquitinyl-[E2 ubiquitin-conjugating enzyme]-L-cysteine + [acceptor protein]-L-lysine = [E2 ubiquitin-conjugating enzyme]-L-cysteine + N(6)-ubiquitinyl-[acceptor protein]-L-lysine.. Its pathway is protein modification; protein ubiquitination. Functionally, E3 ubiquitin-protein ligase that mediates ubiquitination oF target proteins. Depending on the associated E2 ligase, mediates 'Lys-27'-, 'Lys-29'-, 'Lys-48'- and/or 'Lys-63'-linked polyubiquitination of substrates. Part of a BAG6-dependent quality control process ensuring that proteins of the secretory pathway that are mislocalized to the cytosol are degraded by the proteasome. Probably acts by providing the ubiquitin ligase activity associated with the BAG6 complex and be responsible for ubiquitination of the hydrophobic mislocalized proteins and their targeting to the proteasome. May also play a role in the endosomal recycling of IGF2R, the cation-independent mannose-6-phosphate receptor. May play a role in the endosomal sorting and degradation of several membrane receptors including EGFR, FLT3, MET and CXCR4, by mediating their ubiquitination. By ubiquitinating CDKN1A/p21 and targeting it for degradation, may also promote cell proliferation. May monoubiquitinate AICDA. Acts as a regulator of DNA repair by mediating 'Lys-27'- and 'Lys-29'-linked polyubiquitination of MRE11, thereby promoting the exonuclease activity of MRE11. This is E3 ubiquitin-protein ligase RNF126 from Homo sapiens (Human).